Consider the following 202-residue polypeptide: Cold-regulated 413 plasma membrane protein 4 (202 aa).

Residues 1–42 (MGRGEFLAMKTEENAANLINSDMNEFVAAAKKLVKDVGMLGG) lie on the Extracellular side of the membrane. The chain crosses the membrane as a helical span at residues 43–63 (VGFGTSVLQWAASIFAIYLLI). The Cytoplasmic segment spans residues 64-72 (LDRTNWKTK). Residues 73–93 (MLTTLLVPYIFFTLPSVIFQF) traverse the membrane as a helical segment. Residues 94–97 (FSGD) are Extracellular-facing. A helical transmembrane segment spans residues 98–118 (FGKWIALIAIIVRLFFPKEFP). Residue Glu-119 is a topological domain, cytoplasmic. The chain crosses the membrane as a helical span at residues 120–140 (WLEIPVALILIVVVSPSLIAW). Topologically, residues 141–145 (TLRES) are extracellular. A helical transmembrane segment spans residues 146–166 (WVGAVICLVIACYLFHEHIKA). Topologically, residues 167–181 (SGGFKNSFTQKNGIS) are cytoplasmic. Residues 182 to 202 (NTIGIVALLVYPVWTIFFHIF) traverse the membrane as a helical segment.

This sequence belongs to the Cold-regulated 413 protein family.

It is found in the cell membrane. This Arabidopsis thaliana (Mouse-ear cress) protein is Cold-regulated 413 plasma membrane protein 4.